Here is a 123-residue protein sequence, read N- to C-terminus: Small ribosomal subunit protein uS12cz/uS12cy/uS12cx/uS12w (123 aa).

A compositionally biased stretch (polar residues) spans 1–13; the sequence is MPTSNQLLRNSRQ. Residues 1 to 30 are disordered; sequence MPTSNQLLRNSRQPVRKTKKTPALRGCPQR. Over residues 14–30 the composition is skewed to basic residues; the sequence is PVRKTKKTPALRGCPQR.

This sequence belongs to the universal ribosomal protein uS12 family. As to quaternary structure, part of the 30S ribosomal subunit.

The protein localises to the plastid. The protein resides in the chloroplast. With S4 and S5 plays an important role in translational accuracy. Located at the interface of the 30S and 50S subunits. The chain is Small ribosomal subunit protein uS12cz/uS12cy/uS12cx/uS12w (rps12-A) from Pelargonium hortorum (Common geranium).